The primary structure comprises 166 residues: SsrA-binding protein (166 aa).

The disordered stretch occupies residues 143–166 (HDKREDDKRKQANRDMKSALARYR). The segment covering 144–159 (DKREDDKRKQANRDMK) has biased composition (basic and acidic residues).

It belongs to the SmpB family.

It localises to the cytoplasm. Its function is as follows. Required for rescue of stalled ribosomes mediated by trans-translation. Binds to transfer-messenger RNA (tmRNA), required for stable association of tmRNA with ribosomes. tmRNA and SmpB together mimic tRNA shape, replacing the anticodon stem-loop with SmpB. tmRNA is encoded by the ssrA gene; the 2 termini fold to resemble tRNA(Ala) and it encodes a 'tag peptide', a short internal open reading frame. During trans-translation Ala-aminoacylated tmRNA acts like a tRNA, entering the A-site of stalled ribosomes, displacing the stalled mRNA. The ribosome then switches to translate the ORF on the tmRNA; the nascent peptide is terminated with the 'tag peptide' encoded by the tmRNA and targeted for degradation. The ribosome is freed to recommence translation, which seems to be the essential function of trans-translation. This Prochlorococcus marinus (strain MIT 9211) protein is SsrA-binding protein.